The chain runs to 103 residues: Co-chaperonin GroES (103 aa).

Belongs to the GroES chaperonin family. Heptamer of 7 subunits arranged in a ring. Interacts with the chaperonin GroEL.

The protein localises to the cytoplasm. Together with the chaperonin GroEL, plays an essential role in assisting protein folding. The GroEL-GroES system forms a nano-cage that allows encapsulation of the non-native substrate proteins and provides a physical environment optimized to promote and accelerate protein folding. GroES binds to the apical surface of the GroEL ring, thereby capping the opening of the GroEL channel. This chain is Co-chaperonin GroES, found in Synechococcus sp. (strain WH7803).